A 629-amino-acid polypeptide reads, in one-letter code: tRNA uridine 5-carboxymethylaminomethyl modification enzyme MnmG (629 aa).

Residues 13–18 (GGGHAG), Val-125, and Ser-180 each bind FAD. An NAD(+)-binding site is contributed by 273 to 287 (GPRYCPSIEDKVMRF). Position 370 (Gln-370) interacts with FAD.

This sequence belongs to the MnmG family. Homodimer. Heterotetramer of two MnmE and two MnmG subunits. FAD serves as cofactor.

It is found in the cytoplasm. NAD-binding protein involved in the addition of a carboxymethylaminomethyl (cmnm) group at the wobble position (U34) of certain tRNAs, forming tRNA-cmnm(5)s(2)U34. The polypeptide is tRNA uridine 5-carboxymethylaminomethyl modification enzyme MnmG (Escherichia coli O157:H7).